A 318-amino-acid polypeptide reads, in one-letter code: Protein-L-histidine N-pros-methyltransferase (318 aa).

The signal sequence occupies residues 1-18; it reads MRLLAGWLCLSLASVWLA. Residue Asn35 is glycosylated (N-linked (GlcNAc...) asparagine). Residues Glu174, Asn210, and Tyr295 each contribute to the S-adenosyl-L-homocysteine site.

This sequence belongs to the METTL9 family. In terms of tissue distribution, expressed in liver, colon, small intestine, skin, kidney and to a lesser extent in spleen, lung, thymus and stomach. Not detected in fibroblast and endothelial cells.

Its subcellular location is the endoplasmic reticulum. It is found in the mitochondrion. The catalysed reaction is L-histidyl-[protein] + S-adenosyl-L-methionine = N(pros)-methyl-L-histidyl-[protein] + S-adenosyl-L-homocysteine + H(+). Protein-histidine N-methyltransferase that specifically catalyzes 1-methylhistidine (pros-methylhistidine) methylation of target proteins. Specifically methylates the second His of proteins with a His-x-His (HxH) motif (where 'x' is preferably a small amino acid), while exploiting the first one as a recognition signature. Catalyzes methylation of target proteins such as S100A9, NDUFB3, SLC39A5, SLC39A7, ARMC6 and DNAJB12; 1-methylhistidine modification may affect the binding of zinc and other metals to its target proteins. Constitutes the main methyltransferase for the 1-methylhistidine modification in cell. In Mus musculus (Mouse), this protein is Protein-L-histidine N-pros-methyltransferase.